A 248-amino-acid polypeptide reads, in one-letter code: MIVLVTGATAGFGECIARRFVENGHKVIATGRRHERLQALKDELGENVLTAQLDVRNRAAIEEMMASLPAQWRDIDVLVNNAGLALGLEPAHKASVEDWETMIDTNNKGLIYMTRAVLPGMVERNRGHIINIGSTAGSWPYAGGNVYGATKAFVRQFSLNLRTDLHGTAVRVTDIEPGLVGGTEFSSVRFKGDDEKAGKTYENTTALTPEDITEAVWWVATLPAHVNINTVEMMPVTQSFAGLSVHRS.

NADP(+)-binding positions include 7–12 (GATAGF), 32–33 (RR), 54–55 (DV), and Asn-81. Ser-134 lines the substrate pocket. NADP(+) contacts are provided by residues Tyr-147, Lys-151, and 177-185 (PGLVGGTEF). Catalysis depends on Tyr-147, which acts as the Proton acceptor.

The protein belongs to the short-chain dehydrogenases/reductases (SDR) family. In terms of assembly, homotetramer.

It catalyses the reaction 3-hydroxypropanoate + NADP(+) = 3-oxopropanoate + NADPH + H(+). The enzyme catalyses L-allo-threonine + NADP(+) = aminoacetone + CO2 + NADPH. Its function is as follows. NADP-dependent dehydrogenase with broad substrate specificity acting on 3-hydroxy acids. Catalyzes the NADP-dependent oxidation of L-allo-threonine to L-2-amino-3-keto-butyrate, which is spontaneously decarboxylated into aminoacetone. Also acts on D-threonine, L-serine, D-serine, D-3-hydroxyisobutyrate, L-3-hydroxyisobutyrate, D-glycerate and L-glycerate. Able to catalyze the reduction of the malonic semialdehyde to 3-hydroxypropionic acid. YdfG is apparently supplementing RutE, the presumed malonic semialdehyde reductase involved in pyrimidine degradation since both are able to detoxify malonic semialdehyde. This Salmonella typhi protein is NADP-dependent 3-hydroxy acid dehydrogenase YdfG.